The chain runs to 361 residues: Endo-1,4-beta-xylanase 2 (361 aa).

The first 26 residues, 1–26 (MHFSTITAALALLGLGAATPTDYSTS), serve as a signal peptide directing secretion. Positions 46–354 (IGTALTIRDD…KPAYSSVLKT (309 aa)) constitute a GH10 domain. N-linked (GlcNAc...) asparagine glycans are attached at residues N88 and N130. E160 acts as the Proton donor in catalysis. E276 serves as the catalytic Nucleophile. C304 and C310 are disulfide-bonded.

The protein belongs to the glycosyl hydrolase 10 (cellulase F) family.

The protein resides in the secreted. It carries out the reaction Endohydrolysis of (1-&gt;4)-beta-D-xylosidic linkages in xylans.. Its pathway is glycan degradation; xylan degradation. In terms of biological role, endo-1,4-beta-xylanase involved in the hydrolysis of xylan, a major structural heterogeneous polysaccharide found in plant biomass representing the second most abundant polysaccharide in the biosphere, after cellulose. Hydrolyzes birch-wood xylan, with a similar activity toward oat-spelt xylan. Also shows weak activities toward pNP-beta-D-cellobioside and pNP-beta-D-xylopyranoside, but no detectable activity toward carboxymethyl cellulose and pNP-beta-L-arabinofuranoside.-. The chain is Endo-1,4-beta-xylanase 2 (xynII) from Aureobasidium pullulans (Black yeast).